We begin with the raw amino-acid sequence, 444 residues long: Exodeoxyribonuclease 7 large subunit (444 aa).

Belongs to the XseA family. As to quaternary structure, heterooligomer composed of large and small subunits.

The protein resides in the cytoplasm. It catalyses the reaction Exonucleolytic cleavage in either 5'- to 3'- or 3'- to 5'-direction to yield nucleoside 5'-phosphates.. In terms of biological role, bidirectionally degrades single-stranded DNA into large acid-insoluble oligonucleotides, which are then degraded further into small acid-soluble oligonucleotides. The sequence is that of Exodeoxyribonuclease 7 large subunit from Pseudoalteromonas translucida (strain TAC 125).